A 172-amino-acid chain; its full sequence is Peptide methionine sulfoxide reductase MsrA 1 (172 aa).

Residue cysteine 14 is part of the active site.

Belongs to the MsrA Met sulfoxide reductase family.

It carries out the reaction L-methionyl-[protein] + [thioredoxin]-disulfide + H2O = L-methionyl-(S)-S-oxide-[protein] + [thioredoxin]-dithiol. It catalyses the reaction [thioredoxin]-disulfide + L-methionine + H2O = L-methionine (S)-S-oxide + [thioredoxin]-dithiol. Functionally, has an important function as a repair enzyme for proteins that have been inactivated by oxidation. Catalyzes the reversible oxidation-reduction of methionine sulfoxide in proteins to methionine. The polypeptide is Peptide methionine sulfoxide reductase MsrA 1 (msrA1) (Mesorhizobium japonicum (strain LMG 29417 / CECT 9101 / MAFF 303099) (Mesorhizobium loti (strain MAFF 303099))).